Here is a 709-residue protein sequence, read N- to C-terminus: Polyribonucleotide nucleotidyltransferase (709 aa).

D486 and D492 together coordinate Mg(2+). The KH domain maps to 553 to 612; that stretch reads PRIHTIKINPDKIKDVIGKGGSVIRALTEETGTTIEIEDDGTVKIAATDGEKAKHAISRI. The S1 motif domain occupies 622-690; sequence ARIYTGKVTR…RQGRVRLSIK (69 aa).

Belongs to the polyribonucleotide nucleotidyltransferase family. As to quaternary structure, component of the RNA degradosome, which is a multiprotein complex involved in RNA processing and mRNA degradation. Mg(2+) is required as a cofactor.

The protein localises to the cytoplasm. It catalyses the reaction RNA(n+1) + phosphate = RNA(n) + a ribonucleoside 5'-diphosphate. Functionally, involved in mRNA degradation. Catalyzes the phosphorolysis of single-stranded polyribonucleotides processively in the 3'- to 5'-direction. The chain is Polyribonucleotide nucleotidyltransferase from Photorhabdus laumondii subsp. laumondii (strain DSM 15139 / CIP 105565 / TT01) (Photorhabdus luminescens subsp. laumondii).